The sequence spans 59 residues: MANPRHRHTPSRRDKRRANWKATAPNLALCPECKEPKLPHRVCPNCGTYKGRKILEVEE.

This sequence belongs to the bacterial ribosomal protein bL32 family.

The polypeptide is Large ribosomal subunit protein bL32 (Thermodesulfovibrio yellowstonii (strain ATCC 51303 / DSM 11347 / YP87)).